Consider the following 457-residue polypeptide: Secreted effector kinase SteC (457 aa).

Lys256 is a binding site for ATP.

This sequence belongs to the protein kinase superfamily. In terms of processing, autophosphorylated.

It localises to the secreted. Its subcellular location is the host cytoplasm. Functionally, effector proteins function to alter host cell physiology and promote bacterial survival in host tissues. This protein is a kinase, which is required for SPI-2 T3SS-dependent F-actin meshwork formation in infected host cells. In Salmonella typhimurium (strain LT2 / SGSC1412 / ATCC 700720), this protein is Secreted effector kinase SteC (steC).